Reading from the N-terminus, the 82-residue chain is Probable acyl carrier protein IacP (82 aa).

Positions 3-78 (MDIEARVKKV…DICRVVKKSL (76 aa)) constitute a Carrier domain. An O-(pantetheine 4'-phosphoryl)serine modification is found at Ser38.

In terms of processing, 4'-phosphopantetheine is transferred from CoA to a specific serine of apo-IacP.

The protein localises to the cytoplasm. Functionally, acyl carrier protein. The protein is Probable acyl carrier protein IacP (iacP) of Salmonella typhimurium (strain SL1344).